Consider the following 480-residue polypeptide: MAFYSYNSFLAIFWTRLPGHSVYPSCSHFPSLAFLHLPDSHLRTAYIKNCGSRKYSYPSLTGNNKVHPLRTRLPQKLHTTCWLQHVPGKPQLEQTGKPKAASPQPTKEAKTETTEEKRSLRQKIVNELKYYYKGFSLLWIDTKVAARIVWRLLHGNALTRRERRRLLRTCADVFRLVPFMVFIIVPFMEFLIPVFLKLFPDMLPSTFESESKKEEKQKKTMAAKLEIAKFLQETMTEMARRNRAKLGDASSQLSSYVKQVQTGHKPSTKEIVRFSKLFKDQLALEHLDRPQLVALCKLLELQTFGTNNLLRFQLLMTLKSIKADDEIIAKEGVKALSVSELQSACRARGMRSLGLTEEQLCQQLTGWLDLHLKENVPPSLLLLSRTFYLIDVKPKPIELPPNIETPKPNLGIPTPPPPESKENLTDSAPQLKGTKDEEFIQLPPVPSSLIAPAATISKEAILQAKSQETSQNSKADSKGA.

The N-terminal 25 residues, Met1 to Ser25, are a transit peptide targeting the mitochondrion. Topologically, residues Cys26–Arg175 are mitochondrial intermembrane. The interval Gly88–Arg118 is disordered. Residues Lys107–Arg118 are compositionally biased toward basic and acidic residues. Residues Leu176–Leu196 form a helical membrane-spanning segment. At Lys197–Ala480 the chain is on the mitochondrial matrix side. The region spanning Lys219–Asp436 is the Letm1 RBD domain. The tract at residues Glu398–Pro444 is disordered.

It localises to the mitochondrion inner membrane. The polypeptide is LETM1 domain-containing protein LETM2, mitochondrial (Letm2) (Mus musculus (Mouse)).